The sequence spans 828 residues: MVSFLTLTSFFFICFFIHGSSAVDTISGDFTLSGDQTIVSSDGTYEMGFFKPGSSSNFYIGMWYKQLSQTILWVANRDKAVSDKNSSVFKISNGNLILLDGNYQTPVWSTGLNSTSSVSALEAVLQDDGNLVLRTGGSSLSANVLWQSFDHPGDTWLPGVKIRLDKRTGKSQRLTSWKSLEDPSPGLFSLELDESTAYKILWNGSNEYWSSGPWNPQSRIFDSVPEMRLNYIYNFSFFSNTTDSYFTYSIYNQLNVSRFVMDVSGQIKQFTWLEGNKAWNLFWSQPRQQCQVYRYCGSFGICSDKSEPFCRCPQGFRPMSQKDWDLKDYSAGCVRKTELQCSRGDINQFFRLPNMKLADNSEVLTRTSLSICASACQGDCSCKAYAYDEGSSKCLVWSKDVLNLQQLEDENSEGNIFYLRLAASDVPNVGASGKSNNKGLIFGAVLGSLGVIVLVLLVVILILRYRRRKRMRGEKGDGTLSAFSYRELQNATKNFSDKLGGGGFGSVFKGALPDSSDIAVKRLEGISQGEKQFRTEVVTIGTIQHVNLVRLRGFCSEGSKKLLVYDYMPNGSLDSHLFLNQVEEKIVLGWKLRFQIALGTARGLAYLHDECRDCIIHCDIKPENILLDSQFCPKVADFGLAKLVGRDFSRVLTTMRGTRGYLAPEWISGVAITAKADVYSYGMMLFELVSGRRNTEQSENEKVRFFPSWAATILTKDGDIRSLVDPRLEGDAVDIEEVTRACKVACWCIQDEESHRPAMSQVVQILEGVLEVNPPPFPRSIQALVVSDEDVVFFTESSSSSSHNSSQNHKHSSSSSSSKKMTNDNSSA.

The N-terminal stretch at 1–22 (MVSFLTLTSFFFICFFIHGSSA) is a signal peptide. Residues 23 to 146 (VDTISGDFTL…GSSLSANVLW (124 aa)) form the Bulb-type lectin domain. Residues 23 to 439 (VDTISGDFTL…GASGKSNNKG (417 aa)) are Extracellular-facing. Residues Asn-85, Asn-113, Asn-203, Asn-234, Asn-240, and Asn-255 are each glycosylated (N-linked (GlcNAc...) asparagine). The 37-residue stretch at 286-322 (PRQQCQVYRYCGSFGICSDKSEPFCRCPQGFRPMSQK) folds into the EGF-like domain. 4 disulfide bridges follow: Cys-290-Cys-302, Cys-296-Cys-310, Cys-372-Cys-394, and Cys-376-Cys-382. The 82-residue stretch at 341-422 (CSRGDINQFF…EGNIFYLRLA (82 aa)) folds into the PAN domain. Residues 440–460 (LIFGAVLGSLGVIVLVLLVVI) traverse the membrane as a helical segment. The Cytoplasmic segment spans residues 461-828 (LILRYRRRKR…KKMTNDNSSA (368 aa)). The Protein kinase domain occupies 493–770 (KNFSDKLGGG…QVVQILEGVL (278 aa)). ATP is bound by residues 499–507 (LGGGGFGSV) and Lys-521. The residue at position 527 (Ser-527) is a Phosphoserine. Residues 582–600 (VEEKIVLGWKLRFQIALGT) are caM-binding. Residue Asp-619 is the Proton acceptor of the active site. Thr-653 carries the post-translational modification Phosphothreonine. The tract at residues 796 to 828 (ESSSSSSHNSSQNHKHSSSSSSSKKMTNDNSSA) is disordered. Over residues 797–828 (SSSSSSHNSSQNHKHSSSSSSSKKMTNDNSSA) the composition is skewed to low complexity. Ser-815 is modified (phosphoserine).

The protein belongs to the protein kinase superfamily. Ser/Thr protein kinase family.

Its subcellular location is the cell membrane. It carries out the reaction L-seryl-[protein] + ATP = O-phospho-L-seryl-[protein] + ADP + H(+). The catalysed reaction is L-threonyl-[protein] + ATP = O-phospho-L-threonyl-[protein] + ADP + H(+). The protein is G-type lectin S-receptor-like serine/threonine-protein kinase At2g19130 of Arabidopsis thaliana (Mouse-ear cress).